Reading from the N-terminus, the 877-residue chain is Translation initiation factor IF-2 (877 aa).

Residues 66–115 are compositionally biased toward basic and acidic residues; the sequence is PKKESTAKKTTKKDEVKKEEKKTTTKKESKNPAKAVSEKKDEVKKEEKQP. 3 disordered regions span residues 66–127, 187–208, and 241–290; these read PKKE…LEEK, SDESLKRKKKEKKNHPVASKKE, and ENKP…KESE. Residues 192 to 201 are compositionally biased toward basic residues; it reads KRKKKEKKNH. Residues 245–265 are compositionally biased toward polar residues; sequence AQPTNKKQPNILKQSLNNSIN. Residues 376–543 form the tr-type G domain; the sequence is QRAPVITIMG…IVLLQADILE (168 aa). A G1 region spans residues 385–392; sequence GHVDHGKT. 385-392 contributes to the GTP binding site; sequence GHVDHGKT. The G2 stretch occupies residues 410-414; it reads GITQH. The interval 431–434 is G3; that stretch reads DTPG. GTP is bound by residues 431–435 and 485–488; these read DTPGH and NKMD. Residues 485-488 are G4; it reads NKMD. A G5 region spans residues 521–523; the sequence is SAK.

It belongs to the TRAFAC class translation factor GTPase superfamily. Classic translation factor GTPase family. IF-2 subfamily.

Its subcellular location is the cytoplasm. Its function is as follows. One of the essential components for the initiation of protein synthesis. Protects formylmethionyl-tRNA from spontaneous hydrolysis and promotes its binding to the 30S ribosomal subunits. Also involved in the hydrolysis of GTP during the formation of the 70S ribosomal complex. This is Translation initiation factor IF-2 from Campylobacter lari (strain RM2100 / D67 / ATCC BAA-1060).